Here is a 217-residue protein sequence, read N- to C-terminus: Cyclin-P2-1 (217 aa).

It belongs to the cyclin family. Cyclin U/P subfamily.

In Oryza sativa subsp. japonica (Rice), this protein is Cyclin-P2-1 (CYCP2-1).